The following is a 458-amino-acid chain: ATP synthase subunit beta (458 aa).

148-155 (GGAGVGKT) contributes to the ATP binding site.

The protein belongs to the ATPase alpha/beta chains family. F-type ATPases have 2 components, CF(1) - the catalytic core - and CF(0) - the membrane proton channel. CF(1) has five subunits: alpha(3), beta(3), gamma(1), delta(1), epsilon(1). CF(0) has three main subunits: a(1), b(2) and c(9-12). The alpha and beta chains form an alternating ring which encloses part of the gamma chain. CF(1) is attached to CF(0) by a central stalk formed by the gamma and epsilon chains, while a peripheral stalk is formed by the delta and b chains.

It is found in the cell inner membrane. It carries out the reaction ATP + H2O + 4 H(+)(in) = ADP + phosphate + 5 H(+)(out). In terms of biological role, produces ATP from ADP in the presence of a proton gradient across the membrane. The catalytic sites are hosted primarily by the beta subunits. The chain is ATP synthase subunit beta from Shewanella piezotolerans (strain WP3 / JCM 13877).